We begin with the raw amino-acid sequence, 267 residues long: Large ribosomal subunit protein uL4 (267 aa).

This sequence belongs to the universal ribosomal protein uL4 family. As to quaternary structure, part of the 50S ribosomal subunit.

One of the primary rRNA binding proteins, this protein initially binds near the 5'-end of the 23S rRNA. It is important during the early stages of 50S assembly. It makes multiple contacts with different domains of the 23S rRNA in the assembled 50S subunit and ribosome. Its function is as follows. Forms part of the polypeptide exit tunnel. This Saccharolobus islandicus (strain M.16.27) (Sulfolobus islandicus) protein is Large ribosomal subunit protein uL4.